The sequence spans 719 residues: Protein STRUBBELIG-RECEPTOR FAMILY 6 (719 aa).

An N-terminal signal peptide occupies residues 1–29 (MRENWAVVALFTLCIVGFELRFIHGATDA). At 30–293 (SDTSALNTLF…SKKSGIGAGA (264 aa)) the chain is on the extracellular side. 6 LRR repeats span residues 97-118 (SLTE…QFPP), 119-140 (NLQR…SLSQ), 143-164 (PLKY…DFSK), 167-190 (SLTT…SSLT), 191-213 (SLKS…AGLP), and 214-234 (LETL…SLKG). The segment at 242–287 (NSFNTGPAPPPPPGTPPIRGSPSRKSGGRESRSSDESTRNGDSKKS) is disordered. Positions 248–257 (PAPPPPPGTP) are enriched in pro residues. Residues 268-286 (GGRESRSSDESTRNGDSKK) are compositionally biased toward basic and acidic residues. Residues 294–314 (IAGIIISLLVVTALLVAFFLF) traverse the membrane as a helical segment. Topologically, residues 315–719 (RRKKSKRSSP…GSADTTSDYM (405 aa)) are cytoplasmic. 2 disordered regions span residues 322–355 (SSPM…SSVE) and 364–383 (SINL…DEDS). The span at 332–354 (NQPFTLASNDFHENNSIQSSSSV) shows a compositional bias: polar residues. A Phosphoserine modification is found at S377. The region spanning 416 to 690 (FSVDNLLGEG…SEVVQALVVL (275 aa)) is the Protein kinase domain. ATP-binding positions include 422-430 (LGEGTFGRV) and K444. Residues 700-719 (TVGVDPSQRAGSADTTSDYM) form a disordered region. Polar residues predominate over residues 708–719 (RAGSADTTSDYM).

It belongs to the protein kinase superfamily. Ser/Thr protein kinase family. In terms of tissue distribution, expressed in seedlings, roots, stems, leaves, flowers and siliques.

The protein localises to the membrane. The sequence is that of Protein STRUBBELIG-RECEPTOR FAMILY 6 (SRF6) from Arabidopsis thaliana (Mouse-ear cress).